A 339-amino-acid polypeptide reads, in one-letter code: Ketol-acid reductoisomerase (NADP(+)) (339 aa).

The KARI N-terminal Rossmann domain maps to 1–182; sequence MRVYYDRDAD…GGGRAGIIET (182 aa). Residues 24-27, Arg48, Ser51, Ser53, and 83-86 contribute to the NADP(+) site; these read YGSQ and DELQ. Residue His108 is part of the active site. Position 134 (Gly134) interacts with NADP(+). The region spanning 183 to 328 is the KARI C-terminal knotted domain; the sequence is TFKEECETDL…ERLRGMMPWI (146 aa). Mg(2+) contacts are provided by Asp191, Glu195, Glu227, and Glu231. Position 252 (Ser252) interacts with substrate.

The protein belongs to the ketol-acid reductoisomerase family. Mg(2+) is required as a cofactor.

It carries out the reaction (2R)-2,3-dihydroxy-3-methylbutanoate + NADP(+) = (2S)-2-acetolactate + NADPH + H(+). It catalyses the reaction (2R,3R)-2,3-dihydroxy-3-methylpentanoate + NADP(+) = (S)-2-ethyl-2-hydroxy-3-oxobutanoate + NADPH + H(+). It functions in the pathway amino-acid biosynthesis; L-isoleucine biosynthesis; L-isoleucine from 2-oxobutanoate: step 2/4. Its pathway is amino-acid biosynthesis; L-valine biosynthesis; L-valine from pyruvate: step 2/4. Involved in the biosynthesis of branched-chain amino acids (BCAA). Catalyzes an alkyl-migration followed by a ketol-acid reduction of (S)-2-acetolactate (S2AL) to yield (R)-2,3-dihydroxy-isovalerate. In the isomerase reaction, S2AL is rearranged via a Mg-dependent methyl migration to produce 3-hydroxy-3-methyl-2-ketobutyrate (HMKB). In the reductase reaction, this 2-ketoacid undergoes a metal-dependent reduction by NADPH to yield (R)-2,3-dihydroxy-isovalerate. This chain is Ketol-acid reductoisomerase (NADP(+)), found in Methylobacterium sp. (strain 4-46).